The chain runs to 446 residues: Phosphoglucosamine mutase (446 aa).

The active-site Phosphoserine intermediate is serine 101. Residues serine 101, aspartate 240, aspartate 242, and aspartate 244 each coordinate Mg(2+). Position 101 is a phosphoserine (serine 101).

Belongs to the phosphohexose mutase family. Mg(2+) is required as a cofactor. In terms of processing, activated by phosphorylation.

It carries out the reaction alpha-D-glucosamine 1-phosphate = D-glucosamine 6-phosphate. Functionally, catalyzes the conversion of glucosamine-6-phosphate to glucosamine-1-phosphate. This chain is Phosphoglucosamine mutase, found in Pseudomonas entomophila (strain L48).